Consider the following 596-residue polypeptide: Trehalase (596 aa).

The first 23 residues, 1 to 23 (MFKLPTISLLLVSWSCLVALSQA), serve as a signal peptide directing secretion. Substrate is bound by residues arginine 193, 200–201 (WD), asparagine 237, and 246–248 (RSQ). Residues asparagine 288 and asparagine 293 are each glycosylated (N-linked (GlcNAc...) asparagine). The segment at 303 to 323 (SSGPRPESYREDVETGEEFPT) is disordered. Substrate contacts are provided by residues 307-309 (RPE) and glycine 341. The active-site Proton donor/acceptor is the aspartate 343. Asparagine 359, asparagine 451, and asparagine 516 each carry an N-linked (GlcNAc...) asparagine glycan. Glutamate 541 serves as the catalytic Proton donor/acceptor. A substrate-binding site is contributed by glutamate 556.

Belongs to the glycosyl hydrolase 37 family. In terms of tissue distribution, in the adult brain predominantly expressed in glial cells (at protein level).

The catalysed reaction is alpha,alpha-trehalose + H2O = alpha-D-glucose + beta-D-glucose. Functionally, enzyme that cleaves trehalose to produce 2 glucose molecules that can be used by the glycolytic pathway. Glycolysis is essential in glial cells but not in neurons; neurons rely on the citric acid cycle for their energy needs, and on lactate and alanine secreted into the hemolymph by glial cells to fuel it. The protein is Trehalase of Drosophila melanogaster (Fruit fly).